The primary structure comprises 386 residues: Succinate--CoA ligase [ADP-forming] subunit beta (386 aa).

The region spanning 9-244 (KEILRKYGVP…HDEEDPLETR (236 aa)) is the ATP-grasp domain. ATP-binding positions include K46, 53–55 (GRG), E99, C102, and E107. N199 and D213 together coordinate Mg(2+). Substrate contacts are provided by residues N264 and 321–323 (GIM).

This sequence belongs to the succinate/malate CoA ligase beta subunit family. As to quaternary structure, heterotetramer of two alpha and two beta subunits. Mg(2+) is required as a cofactor.

It catalyses the reaction succinate + ATP + CoA = succinyl-CoA + ADP + phosphate. The enzyme catalyses GTP + succinate + CoA = succinyl-CoA + GDP + phosphate. It functions in the pathway carbohydrate metabolism; tricarboxylic acid cycle; succinate from succinyl-CoA (ligase route): step 1/1. In terms of biological role, succinyl-CoA synthetase functions in the citric acid cycle (TCA), coupling the hydrolysis of succinyl-CoA to the synthesis of either ATP or GTP and thus represents the only step of substrate-level phosphorylation in the TCA. The beta subunit provides nucleotide specificity of the enzyme and binds the substrate succinate, while the binding sites for coenzyme A and phosphate are found in the alpha subunit. The protein is Succinate--CoA ligase [ADP-forming] subunit beta of Rickettsia rickettsii (strain Iowa).